A 353-amino-acid chain; its full sequence is MPDSPTESYGPDREYHVFISLFLCRNTSGKFLSVGPATPGWSINNTVVKENYYTEKLSCIITFNTLNFLTATISVVGTAGNATVLRLLGFHMHRYAFSVYVFNLAGADFLYLCTQTVYSLECVLQFDNSYFYFLLTILMFAYLAALCMIPAISTERCLSVTWPIWYHCQRPRHTSATVCALFWAFSLLLRLLLGQGCGFLFGKYDYYFCRYCSFITTAFLIVLFVVPFVSSLAMLTKIICGSHRIPVTRFYVTIAVTVLVFTFFGLPVGIISLLLPRIVVFRGVFYIYKIVTFLYSVNCCANPIIYFLIGSIRHHRLQRQSLKLLLQRAMQDTPEEEGGVKGPSQKSNELEIV.

The Extracellular segment spans residues M1–N67. N-linked (GlcNAc...) asparagine glycans are attached at residues N26 and N44. A helical membrane pass occupies residues F68–F90. Residues H91–A96 are Cytoplasmic-facing. Residues F97–V117 form a helical membrane-spanning segment. The Extracellular portion of the chain corresponds to Y118–F131. The helical transmembrane segment at Y132–I152 threads the bilayer. Residues S153–A180 lie on the Cytoplasmic side of the membrane. The chain crosses the membrane as a helical span at residues L181–F201. The Extracellular portion of the chain corresponds to G202–S213. Residues F214–M234 form a helical membrane-spanning segment. Over L235–T253 the chain is Cytoplasmic. Residues I254–L274 traverse the membrane as a helical segment. Residues L275–K289 lie on the Extracellular side of the membrane. A helical transmembrane segment spans residues I290–G310. The Cytoplasmic portion of the chain corresponds to S311–V353. Residues T333–V353 form a disordered region.

Belongs to the G-protein coupled receptor 1 family. Mas subfamily. In terms of tissue distribution, expressed strongly in newborn dorsal root ganglia, adult dorsal root ganglia and trigeminal ganlia.

The protein localises to the membrane. Functionally, orphan receptor. Probably involved in the function of nociceptive neurons. May regulate nociceptor function and/or development, including the sensation or modulation of pain. The protein is Mas-related G-protein coupled receptor member B5 (Mrgprb5) of Rattus norvegicus (Rat).